The following is an 80-amino-acid chain: Sulfur carrier protein TusA (80 aa).

The active-site Cysteine persulfide intermediate is C17.

It belongs to the sulfur carrier protein TusA family.

It localises to the cytoplasm. Sulfur carrier protein which probably makes part of a sulfur-relay system. This Pseudomonas putida (strain ATCC 47054 / DSM 6125 / CFBP 8728 / NCIMB 11950 / KT2440) protein is Sulfur carrier protein TusA.